A 314-amino-acid chain; its full sequence is Tyrosine recombinase XerC (314 aa).

One can recognise a Core-binding (CB) domain in the interval 1–85 (MNEQVEAFLR…AVKSFFTFLT (85 aa)). In terms of domain architecture, Tyr recombinase spans 106–291 (DLPRALTPRQ…NHESSHTPHA (186 aa)). Residues Arg147, Lys171, His243, Arg246, and His269 contribute to the active site. The active-site O-(3'-phospho-DNA)-tyrosine intermediate is the Tyr278. The disordered stretch occupies residues 284 to 314 (ESSHTPHAHPAPRASEVNGVRDEQALVPEEK). A compositionally biased stretch (basic and acidic residues) spans 302–314 (GVRDEQALVPEEK).

Belongs to the 'phage' integrase family. XerC subfamily. In terms of assembly, forms a cyclic heterotetrameric complex composed of two molecules of XerC and two molecules of XerD.

The protein localises to the cytoplasm. Functionally, site-specific tyrosine recombinase, which acts by catalyzing the cutting and rejoining of the recombining DNA molecules. The XerC-XerD complex is essential to convert dimers of the bacterial chromosome into monomers to permit their segregation at cell division. It also contributes to the segregational stability of plasmids. This Roseiflexus castenholzii (strain DSM 13941 / HLO8) protein is Tyrosine recombinase XerC.